A 350-amino-acid chain; its full sequence is Protein RecA (350 aa).

68 to 75 provides a ligand contact to ATP; the sequence is GPESSGKT.

The protein belongs to the RecA family.

The protein localises to the cytoplasm. Functionally, can catalyze the hydrolysis of ATP in the presence of single-stranded DNA, the ATP-dependent uptake of single-stranded DNA by duplex DNA, and the ATP-dependent hybridization of homologous single-stranded DNAs. It interacts with LexA causing its activation and leading to its autocatalytic cleavage. In Mycolicibacterium gilvum (strain PYR-GCK) (Mycobacterium gilvum (strain PYR-GCK)), this protein is Protein RecA.